We begin with the raw amino-acid sequence, 490 residues long: MAPLQAIRKYDYLVIGGGSGGVASARRAASYGAKVLLIESKFNKMGGTCVNVGCVPKKVMWYAGDLAEKRHHLKSYGLSTTDDKVKYGDFDWSTFKDKRDAYVKRLNGIYERNLKNEGVDYIYGFAHFANSNGDVEVTLTGDQELSFLEEGKEFKKDEKLVFAGSKTLIATGGYAINPPNVEGHELGTTSDGFFELQKQPKSVAVVGAGYIGVELSGIFKALGSETHLVIRGDTVLRSFDESIQNSITDYYTDKLGVNIIKQSGSVSKVEKIDGDRKKITLGNGQVLEVDELIWTMGRKSLINIGLDKVGVTLNDKQQVDVDQFQQTANPNIFSLGDVIGKVELTPVAIAAGRRLSNRLFSGDKAFENDHLDYSNVPSVIFSHPEAGSIGLSCKEAKEKYGEDQIKIYKSKFNAMYYAMMEDDSLKSPTSYKVVCAGEDEKVVGLHIVGDSSAEILQGFGVAIKMGATKKDFDSCVAIHPTSAEELVTMK.

FAD contacts are provided by Ser-19 and Gly-20. Residue Ser-19 coordinates glutathione. Arg-26 lines the glutathione pocket. FAD contacts are provided by Glu-39, Thr-48, Cys-49, and Lys-57. Residues Cys-49 and Cys-54 are joined by a disulfide bond. Glutathione is bound at residue Tyr-110. Residue Ala-126 participates in FAD binding. NADP(+)-binding residues include Ala-208, Ile-211, Glu-214, Arg-231, and Arg-237. Residue Ser-246 participates in glutathione binding. Gly-297 contacts NADP(+). Position 337 (Asp-337) interacts with FAD. NADP(+) is bound at residue Glu-343. Thr-345 serves as a coordination point for FAD. Arg-353 provides a ligand contact to glutathione. An NADP(+)-binding site is contributed by Val-379. Lys-432 contacts glutathione. His-479 provides a ligand contact to FAD. His-479 (proton acceptor) is an active-site residue.

This sequence belongs to the class-I pyridine nucleotide-disulfide oxidoreductase family. As to quaternary structure, homodimer. The cofactor is FAD.

Its subcellular location is the cytoplasm. It is found in the mitochondrion. The enzyme catalyses 2 glutathione + NADP(+) = glutathione disulfide + NADPH + H(+). Catalyzes the reduction of glutathione disulfide (GSSG) to reduced glutathione (GSH). Constitutes the major mechanism to maintain a high GSH:GSSG ratio in the cytosol. The sequence is that of Glutathione reductase (GLR1) from Debaryomyces hansenii (strain ATCC 36239 / CBS 767 / BCRC 21394 / JCM 1990 / NBRC 0083 / IGC 2968) (Yeast).